The sequence spans 81 residues: Cytochrome b559 subunit alpha (81 aa).

Residues 21–35 (VIHSITIPALFIAGW) traverse the membrane as a helical segment. Residue histidine 23 participates in heme binding.

It belongs to the PsbE/PsbF family. In terms of assembly, heterodimer of an alpha subunit and a beta subunit. PSII is composed of 1 copy each of membrane proteins PsbA, PsbB, PsbC, PsbD, PsbE, PsbF, PsbH, PsbI, PsbJ, PsbK, PsbL, PsbM, PsbT, PsbX, PsbY, PsbZ, Psb30/Ycf12, at least 3 peripheral proteins of the oxygen-evolving complex and a large number of cofactors. It forms dimeric complexes. The cofactor is heme b.

It localises to the plastid. Its subcellular location is the chloroplast thylakoid membrane. This b-type cytochrome is tightly associated with the reaction center of photosystem II (PSII). PSII is a light-driven water:plastoquinone oxidoreductase that uses light energy to abstract electrons from H(2)O, generating O(2) and a proton gradient subsequently used for ATP formation. It consists of a core antenna complex that captures photons, and an electron transfer chain that converts photonic excitation into a charge separation. The polypeptide is Cytochrome b559 subunit alpha (Tetradesmus obliquus (Green alga)).